A 366-amino-acid polypeptide reads, in one-letter code: Ferredoxin--NADP reductase (366 aa).

7 residues coordinate FAD: Asp51, Gln59, Tyr64, Val104, Phe139, Asp308, and Thr349.

Belongs to the ferredoxin--NADP reductase type 2 family. As to quaternary structure, homodimer. The cofactor is FAD.

The catalysed reaction is 2 reduced [2Fe-2S]-[ferredoxin] + NADP(+) + H(+) = 2 oxidized [2Fe-2S]-[ferredoxin] + NADPH. The protein is Ferredoxin--NADP reductase of Polaromonas sp. (strain JS666 / ATCC BAA-500).